The sequence spans 214 residues: Large ribosomal subunit protein uL3 (214 aa).

The segment at 134–153 is disordered; that stretch reads ATHGNSLSHRAPGSIGQNQT. At Gln152 the chain carries N5-methylglutamine.

It belongs to the universal ribosomal protein uL3 family. In terms of assembly, part of the 50S ribosomal subunit. Forms a cluster with proteins L14 and L19. Post-translationally, methylated by PrmB.

Its function is as follows. One of the primary rRNA binding proteins, it binds directly near the 3'-end of the 23S rRNA, where it nucleates assembly of the 50S subunit. The protein is Large ribosomal subunit protein uL3 of Buchnera aphidicola subsp. Baizongia pistaciae (strain Bp).